We begin with the raw amino-acid sequence, 31 residues long: GSTPCGESCVWIPCISGIVGCSCSNKVCYMD.

A cross-link (cyclopeptide (Gly-Asp)) is located at residues 1–31 (GSTPCGESCVWIPCISGIVGCSCSNKVCYMD). 3 disulfide bridges follow: Cys5–Cys21, Cys9–Cys23, and Cys14–Cys28.

Post-translationally, this is a cyclic peptide. In terms of tissue distribution, detected in seeds (at protein level).

Its function is as follows. Probably participates in a plant defense mechanism. This chain is Cyclotide hyen-I, found in Pigea enneasperma (Spade flower).